The sequence spans 928 residues: BCAS3 microtubule associated cell migration factor (928 aa).

At Met1 the chain carries N-acetylmethionine. A WD repeat occupies 69 to 114 (DLNDTSRNLEFHEIHSTGNEPPLLIMIGYSDGMQVWSIPISGEAQE). Lys215 participates in a covalent cross-link: Glycyl lysine isopeptide (Lys-Gly) (interchain with G-Cter in SUMO1); alternate. Lys215 is covalently cross-linked (Glycyl lysine isopeptide (Lys-Gly) (interchain with G-Cter in SUMO2); alternate). Required for recruitment to preautophagosomal structure in response to mitophagy regions lie at residues 254-312 (RGGA…SRRS) and 437-560 (YGGQ…IKAP). Phosphoserine is present on residues Ser461, Ser480, and Ser488. 2 disordered regions span residues 472–515 (TSKQ…PGNP) and 755–777 (TTVISSSSSVLQSHGPSDTPQPL). Low complexity-rich tracts occupy residues 480–494 (SPVPGLSSSPSGSPL), 505–514 (NNFTNNNPGN), and 755–771 (TTVISSSSSVLQSHGPS). Phosphoserine is present on residues Ser838, Ser886, and Ser898. Positions 868-928 (ESPSRDVVGS…PLSLFPTGFP (61 aa)) are disordered. The span at 887 to 901 (IETLSNSSGSTSGSI) shows a compositional bias: low complexity.

It belongs to the BCAS3 family. Interacts with histone H3, ESR1, KAT2B and PELP1; the interactions occur in a estrogen-dependent manner. Interacts with beta-tubulin and VIM. Interacts (via C-terminal) with PHAF1; the interaction is requrired for the association with the phagophore. In terms of tissue distribution, expressed in stomach, liver, lung, kidney, prostate, testis, thyroid gland, adrenal gland, brain, heart, skeletal muscle, colon, spleen, small intestine, placenta, blood leukocyte and mammary epithelial cells. Expressed in undifferentiated ES cells. Expressed in blood islands and nascent blood vessels derived from differentiated ES cells into embryoid bodies (BD). Expressed in endothelial cells. Not detected in brain. Expressed in brain tumors (at protein level). Expressed in brain. Highly expressed in breast cancers and in glioma cell lines.

It localises to the nucleus. The protein resides in the cytoplasm. It is found in the cytoskeleton. The protein localises to the preautophagosomal structure. Its function is as follows. Plays a role in angiogenesis. Participates in the regulation of cell polarity and directional endothelial cell migration by mediating both the activation and recruitment of CDC42 and the reorganization of the actin cytoskeleton at the cell leading edge. Promotes filipodia formation. Functions synergistically with PELP1 as a transcriptional coactivator of estrogen receptor-responsive genes. Stimulates histone acetyltransferase activity. Binds to chromatin. Plays a regulatory role in autophagic activity. In complex with PHAF1, associates with the preautophagosomal structure during both non-selective and selective autophagy. Probably binds phosphatidylinositol 3-phosphate (PtdIns3P) which would mediate the recruitment preautophagosomal structures. This chain is BCAS3 microtubule associated cell migration factor, found in Homo sapiens (Human).